Here is a 443-residue protein sequence, read N- to C-terminus: Threonine/serine transporter TdcC (443 aa).

11 consecutive transmembrane segments (helical) span residues 22-42 (TTWT…FFPI), 44-64 (AGFG…PIAF), 97-117 (GVVI…IYGV), 140-160 (FVAL…KDLM), 163-183 (VMSY…LSLI), 207-227 (ILIT…FSPI), 261-281 (MLMV…LSPA), 311-331 (FAIT…FKSF), 366-386 (LSMI…PNIL), 389-409 (IEAM…MYAI), and 423-443 (DNVF…YKLF).

The protein belongs to the amino acid/polyamine transporter 2 family. SdaC/TdcC subfamily.

It is found in the cell inner membrane. The catalysed reaction is L-threonine(in) + H(+)(in) = L-threonine(out) + H(+)(out). It catalyses the reaction L-serine(in) + H(+)(in) = L-serine(out) + H(+)(out). Functionally, involved in the import of threonine and serine into the cell, with the concomitant import of a proton (symport system). The protein is Threonine/serine transporter TdcC of Shigella flexneri serotype 5b (strain 8401).